The chain runs to 515 residues: Probable cytosol aminopeptidase (515 aa).

Lysine 279 and aspartate 284 together coordinate Mn(2+). Lysine 291 is a catalytic residue. Mn(2+) contacts are provided by aspartate 302, aspartate 361, and glutamate 363. Arginine 365 is a catalytic residue.

The protein belongs to the peptidase M17 family. Requires Mn(2+) as cofactor.

The protein resides in the cytoplasm. It carries out the reaction Release of an N-terminal amino acid, Xaa-|-Yaa-, in which Xaa is preferably Leu, but may be other amino acids including Pro although not Arg or Lys, and Yaa may be Pro. Amino acid amides and methyl esters are also readily hydrolyzed, but rates on arylamides are exceedingly low.. The enzyme catalyses Release of an N-terminal amino acid, preferentially leucine, but not glutamic or aspartic acids.. Presumably involved in the processing and regular turnover of intracellular proteins. Catalyzes the removal of unsubstituted N-terminal amino acids from various peptides. In Mycobacterium tuberculosis (strain ATCC 25177 / H37Ra), this protein is Probable cytosol aminopeptidase.